Here is a 239-residue protein sequence, read N- to C-terminus: Endolytic peptidoglycan transglycosylase RlpA (239 aa).

A signal peptide spans Met-1–Ala-25. Residues Val-160–Gly-239 enclose the SPOR domain.

It belongs to the RlpA family.

Functionally, lytic transglycosylase with a strong preference for naked glycan strands that lack stem peptides. The polypeptide is Endolytic peptidoglycan transglycosylase RlpA (Neisseria meningitidis serogroup A / serotype 4A (strain DSM 15465 / Z2491)).